The following is a 286-amino-acid chain: Transmembrane protein 156 (286 aa).

Over 1–4 (MTET) the chain is Cytoplasmic. The chain crosses the membrane as a helical span at residues 5-25 (AFLKLFVAIVITFILVLPEFF). Residues 26-214 (KTPKERTLEL…KSVTCSMKIT (189 aa)) are Extracellular-facing. Asn45, Asn54, Asn76, and Asn142 each carry an N-linked (GlcNAc...) asparagine glycan. The helical transmembrane segment at 215–235 (WYVLVLFVFMLGIIFIIYKIL) threads the bilayer. At 236–286 (EEHRRVWRRQSHNYKSSSVLFRGHDSGKLSTLNVRVIPGYPWTIWTRDFDE) the chain is on the cytoplasmic side.

The protein localises to the membrane. This is Transmembrane protein 156 (Tmem156) from Rattus norvegicus (Rat).